A 444-amino-acid chain; its full sequence is Ribulose bisphosphate carboxylase large chain (444 aa).

K5 is subject to N6,N6,N6-trimethyllysine. Substrate-binding residues include N114 and T164. K166 functions as the Proton acceptor in the catalytic mechanism. K168 contributes to the substrate binding site. Mg(2+) is bound by residues K192, D194, and E195. K192 is modified (N6-carboxylysine). H285 functions as the Proton acceptor in the catalytic mechanism. Substrate-binding residues include R286, H318, and S370.

It belongs to the RuBisCO large chain family. Type I subfamily. Heterohexadecamer of 8 large chains and 8 small chains; disulfide-linked. The disulfide link is formed within the large subunit homodimers. It depends on Mg(2+) as a cofactor. In terms of processing, the disulfide bond which can form in the large chain dimeric partners within the hexadecamer appears to be associated with oxidative stress and protein turnover.

Its subcellular location is the plastid. It localises to the chloroplast. It catalyses the reaction 2 (2R)-3-phosphoglycerate + 2 H(+) = D-ribulose 1,5-bisphosphate + CO2 + H2O. The catalysed reaction is D-ribulose 1,5-bisphosphate + O2 = 2-phosphoglycolate + (2R)-3-phosphoglycerate + 2 H(+). Its function is as follows. RuBisCO catalyzes two reactions: the carboxylation of D-ribulose 1,5-bisphosphate, the primary event in carbon dioxide fixation, as well as the oxidative fragmentation of the pentose substrate in the photorespiration process. Both reactions occur simultaneously and in competition at the same active site. The sequence is that of Ribulose bisphosphate carboxylase large chain from Botrychium strictum (Fern).